The chain runs to 1011 residues: MASRRPTHRHHTEAPDPGGRGRGRGRAARYAQPQPQPQQQQQQQGRGCRARGASPPPPPQQQQQQQPRSTPTRATTVTVASSSSTTATASSSPLAPELRQAIMEAPRPSELAQPSPTPPQEQPVDAATTTPHHIPSSSKSIRFPLRPGKGTIGTRCMVKANHFFAHLPNKDLHHYDVSITPEVTSRIVNRAVIKELVNLYKASYLGGRLPAYDGRKSLYTAGPLPFTSQEFQITLLDDDDGSGSERRQRTFRVVIKFAARADLHRLELFLAGRHAEAPQEALQVLDIVLRELPSARYAPFGRSFFSPYLGRRQPLGEGLESWRGFYQSIRPTQMGLSLNIDMSATAFIEPLPVIDFVAQLLNSDIHSRPLSDAERVKIKKALRGVKVEVTHRGNMRRKYRISGLTIQPTRELTFPVDEGGTVKSVVQYFQETYGFAIQHTYLPCLTVQRLNYLPMEVCKIVEGQRYSKRLNQNQIRALLEETCQHPRDRERDIIKMVKHNAYQDDPYAKEFGIKISDRLASVEARILPAPRLKYNETGREKDCLPRVGQWNMMNKKMVNGGKVRSWMCVNFARNVQESVVRGFCHELALMCQASGMDFAPEPILPPLNAHPDQVERALKARYHDAMNVLGPQRRELDLLIGILPDNNGSLYGDLKRVCEIDLGIVSQCCCTKQVFKMNKQILANLALKINVKVGGRNTVLVDAVSRRIPLVTDRPTIIFGADVTHPHPGEDSSPSIAAVVASQDWPEVTKYAGLVSAQAHRQELIEDLYKIWQDPQRGTVSGGMIRELLISFKRSTGEKPQRIIFYRDGVSEGQFYQVLLYELNAIRKACASLETNYQPKVTFIVVQKRHHTRLFAHNHNDQNSVDRSGNILPGTVVDSKICHPTEFDFYLCSHAGIKGTSRPAHYHVLWDENNFTADALQILTNNLCYTYARCTRSVSIVPPAYYAHLAAFRARFYMEPDTSDSSSVVSGPGVRGPLSGSSTSRTRAPGGAAVKPLPALKDSVKRVMFYC.

Positions 1–11 (MASRRPTHRHH) are enriched in basic residues. Disordered regions lie at residues 1–95 (MASR…SPLA) and 107–147 (RPSE…PLRP). Composition is skewed to low complexity over residues 28 to 53 (ARYA…ARGA) and 61 to 92 (QQQQ…ASSS). Residues 127–140 (ATTTPHHIPSSSKS) show a composition bias toward polar residues. The PAZ domain occupies 352–462 (PVIDFVAQLL…LPMEVCKIVE (111 aa)). Residues 638 to 959 (LLIGILPDNN…AAFRARFYME (322 aa)) enclose the Piwi domain. Low complexity predominate over residues 963–982 (SDSSSVVSGPGVRGPLSGSS). The disordered stretch occupies residues 963-994 (SDSSSVVSGPGVRGPLSGSSTSRTRAPGGAAV).

Belongs to the argonaute family. Ago subfamily.

In terms of biological role, probably involved in the RNA silencing pathway. May bind to short RNAs such as microRNAs (miRNAs) or short interfering RNAs (siRNAs), and represses the translation of mRNAs which are complementary to them. The sequence is that of Protein argonaute 1C (AGO1C) from Oryza sativa subsp. japonica (Rice).